The primary structure comprises 583 residues: Isocitrate dehydrogenase kinase/phosphatase (583 aa).

ATP-binding positions include 315 to 321 (APGIRGM) and Lys-336. Asp-371 is an active-site residue.

The protein belongs to the AceK family.

It localises to the cytoplasm. It carries out the reaction L-seryl-[isocitrate dehydrogenase] + ATP = O-phospho-L-seryl-[isocitrate dehydrogenase] + ADP + H(+). Bifunctional enzyme which can phosphorylate or dephosphorylate isocitrate dehydrogenase (IDH) on a specific serine residue. This is a regulatory mechanism which enables bacteria to bypass the Krebs cycle via the glyoxylate shunt in response to the source of carbon. When bacteria are grown on glucose, IDH is fully active and unphosphorylated, but when grown on acetate or ethanol, the activity of IDH declines drastically concomitant with its phosphorylation. This chain is Isocitrate dehydrogenase kinase/phosphatase, found in Salmonella gallinarum (strain 287/91 / NCTC 13346).